The chain runs to 366 residues: Heat-inducible transcription repressor HrcA (366 aa).

Residues Ser298–Ala309 show a composition bias toward polar residues. The tract at residues Ser298–Thr318 is disordered.

This sequence belongs to the HrcA family.

Its function is as follows. Negative regulator of class I heat shock genes (grpE-dnaK-dnaJ and groELS operons). Prevents heat-shock induction of these operons. The chain is Heat-inducible transcription repressor HrcA from Bifidobacterium animalis subsp. lactis (strain AD011).